The chain runs to 171 residues: MFSKLFTTSCLVAIALTTAQEEVSGKVSSTKRRQYVAAQQPAVPVVAPVGQCPGGPSLPIECDPKRPWPQCPPQSYCYATNSVDIGPYFCCPVWSTYGAAWRPATPFYNYVPPVPANWPDVAKMTANWPAAAVSVPVKARKPTKSDDEEEEVGKMGGISSSINSWVQRQKL.

A disordered region spans residues 139-171 (ARKPTKSDDEEEEVGKMGGISSSINSWVQRQKL). A compositionally biased stretch (polar residues) spans 158 to 171 (ISSSINSWVQRQKL).

This is an uncharacterized protein from Caenorhabditis elegans.